The chain runs to 274 residues: SPbeta prophage-derived UPF0714 protein YoqZ (274 aa).

This sequence belongs to the UPF0714 family.

This Bacillus subtilis (strain 168) protein is SPbeta prophage-derived UPF0714 protein YoqZ (yoqZ).